The primary structure comprises 507 residues: ATP synthase subunit alpha, chloroplastic (507 aa).

ATP is bound at residue 170 to 177 (GDRQTGKT). Position 257 is a phosphothreonine (threonine 257).

It belongs to the ATPase alpha/beta chains family. In terms of assembly, F-type ATPases have 2 components, CF(1) - the catalytic core - and CF(0) - the membrane proton channel. CF(1) has five subunits: alpha(3), beta(3), gamma(1), delta(1), epsilon(1). CF(0) has four main subunits: a, b, b' and c.

The protein localises to the plastid. The protein resides in the chloroplast thylakoid membrane. It carries out the reaction ATP + H2O + 4 H(+)(in) = ADP + phosphate + 5 H(+)(out). Produces ATP from ADP in the presence of a proton gradient across the membrane. The alpha chain is a regulatory subunit. This is ATP synthase subunit alpha, chloroplastic from Lepidium virginicum (Virginia pepperweed).